Reading from the N-terminus, the 530-residue chain is Histone-arginine methyltransferase CARMER (530 aa).

One can recognise an SAM-dependent MTase PRMT-type domain in the interval Ala-141 to His-450. Positions 154, 163, 187, 209, 238, and 266 each coordinate S-adenosyl-L-methionine. Arg-501 carries the asymmetric dimethylarginine; by autocatalysis modification.

The protein belongs to the class I-like SAM-binding methyltransferase superfamily. Protein arginine N-methyltransferase family. Homodimer. Post-translationally, the dimethylated protein is the major form.

It is found in the cytoplasm. The protein localises to the nucleus. It carries out the reaction L-arginyl-[protein] + 2 S-adenosyl-L-methionine = N(omega),N(omega)-dimethyl-L-arginyl-[protein] + 2 S-adenosyl-L-homocysteine + 2 H(+). Methylates (mono- and asymmetric dimethylation) the guanidino nitrogens of arginyl residues in proteins. May methylate histone H3 at 'Arg-17' and activate transcription via chromatin remodeling. The polypeptide is Histone-arginine methyltransferase CARMER (Art4) (Drosophila yakuba (Fruit fly)).